A 691-amino-acid chain; its full sequence is Elongation factor G (691 aa).

Positions Glu-8–Val-283 constitute a tr-type G domain. GTP-binding positions include Ala-17–Thr-24, Asp-81–His-85, and Asn-135–Asp-138.

The protein belongs to the TRAFAC class translation factor GTPase superfamily. Classic translation factor GTPase family. EF-G/EF-2 subfamily.

The protein localises to the cytoplasm. Catalyzes the GTP-dependent ribosomal translocation step during translation elongation. During this step, the ribosome changes from the pre-translocational (PRE) to the post-translocational (POST) state as the newly formed A-site-bound peptidyl-tRNA and P-site-bound deacylated tRNA move to the P and E sites, respectively. Catalyzes the coordinated movement of the two tRNA molecules, the mRNA and conformational changes in the ribosome. The sequence is that of Elongation factor G from Methylorubrum populi (strain ATCC BAA-705 / NCIMB 13946 / BJ001) (Methylobacterium populi).